A 632-amino-acid chain; its full sequence is Golgin subfamily A member 8O (632 aa).

The interval 1–76 (MAEETQHNKL…TSSATLKDLE (76 aa)) is disordered. The segment covering 38–50 (TNGSIPETATSGG) has biased composition (polar residues). 2 coiled-coil regions span residues 85-150 (VLDS…TDLY) and 209-421 (ELEQ…SLMA). Disordered stretches follow at residues 423 to 452 (PGEGHGGEHLDSEGEEAPRPMPSVPEDPES), 505 to 524 (DAALGGGHHQAGAQGGDEGE), and 552 to 612 (NSAD…EHPG). Positions 427–440 (HGGEHLDSEGEEAP) are enriched in basic and acidic residues. Positions 508 to 520 (LGGGHHQAGAQGG) are enriched in gly residues. Residues 569–578 (AADKHGDLRE) show a composition bias toward basic and acidic residues.

It belongs to the GOLGA6 family.

This chain is Golgin subfamily A member 8O (GOLGA8O), found in Homo sapiens (Human).